The following is a 290-amino-acid chain: Nucleotide-binding protein BAV3158 (290 aa).

9-16 serves as a coordination point for ATP; sequence GISGSGKS. Position 58–61 (58–61) interacts with GTP; sequence DVRS.

The protein belongs to the RapZ-like family.

Functionally, displays ATPase and GTPase activities. This chain is Nucleotide-binding protein BAV3158, found in Bordetella avium (strain 197N).